We begin with the raw amino-acid sequence, 78 residues long: Translational regulator CsrA (78 aa).

This sequence belongs to the CsrA/RsmA family. As to quaternary structure, homodimer; the beta-strands of each monomer intercalate to form a hydrophobic core, while the alpha-helices form wings that extend away from the core.

It is found in the cytoplasm. A translational regulator that binds mRNA to regulate translation initiation and/or mRNA stability. Usually binds in the 5'-UTR at or near the Shine-Dalgarno sequence preventing ribosome-binding, thus repressing translation. Its main target seems to be the major flagellin gene, while its function is anatagonized by FliW. This is Translational regulator CsrA from Oleidesulfovibrio alaskensis (strain ATCC BAA-1058 / DSM 17464 / G20) (Desulfovibrio alaskensis).